Consider the following 258-residue polypeptide: Indole-3-glycerol phosphate synthase (258 aa).

The protein belongs to the TrpC family.

It carries out the reaction 1-(2-carboxyphenylamino)-1-deoxy-D-ribulose 5-phosphate + H(+) = (1S,2R)-1-C-(indol-3-yl)glycerol 3-phosphate + CO2 + H2O. The protein operates within amino-acid biosynthesis; L-tryptophan biosynthesis; L-tryptophan from chorismate: step 4/5. The sequence is that of Indole-3-glycerol phosphate synthase from Chlorobium phaeovibrioides (strain DSM 265 / 1930) (Prosthecochloris vibrioformis (strain DSM 265)).